Reading from the N-terminus, the 448-residue chain is Maintenance of mitochondrial morphology protein 1 (448 aa).

Over 1–74 the chain is Lumenal; sequence MTESVIYSGT…LNHTWSFTQG (74 aa). Residues 75 to 95 form a helical membrane-spanning segment; sequence LVVGQLSVIVVVAIFIKFFVF. Topologically, residues 96–448 are cytoplasmic; the sequence is ADSSATTTTT…IVDKTEEASI (353 aa). Disordered regions lie at residues 119–144 and 303–357; these read RNKNVRGTSNEDKDPNNNKEDDLNSP and LQNV…SQED. Residues 127 to 140 show a composition bias toward basic and acidic residues; sequence SNEDKDPNNNKEDD. The 256-residue stretch at 164-419 folds into the SMP-LTD domain; sequence SPESLDWFNV…EPRFQVVKVP (256 aa). Positions 313–332 are enriched in low complexity; it reads PSNEPNSQNQTQQPTPVNNS. Residues 345–356 show a composition bias toward basic and acidic residues; it reads ETKHSKAKRSQE.

It belongs to the MMM1 family. In terms of assembly, homodimer. Component of the ER-mitochondria encounter structure (ERMES) or MDM complex, composed of MMM1, MDM10, MDM12 and MDM34. An MMM1 homodimer associates with one molecule of MDM12 on each side in a pairwise head-to-tail manner, and the SMP-LTD domains of MMM1 and MDM12 generate a continuous hydrophobic tunnel for phospholipid trafficking.

Its subcellular location is the endoplasmic reticulum membrane. Its function is as follows. Component of the ERMES/MDM complex, which serves as a molecular tether to connect the endoplasmic reticulum (ER) and mitochondria. Components of this complex are involved in the control of mitochondrial shape and protein biogenesis, and function in nonvesicular lipid trafficking between the ER and mitochondria. The MDM12-MMM1 subcomplex functions in the major beta-barrel assembly pathway that is responsible for biogenesis of all outer membrane beta-barrel proteins, and acts in a late step after the SAM complex. The MDM10-MDM12-MMM1 subcomplex further acts in the TOM40-specific pathway after the action of the MDM12-MMM1 complex. Essential for establishing and maintaining the structure of mitochondria and maintenance of mtDNA nucleoids. The polypeptide is Maintenance of mitochondrial morphology protein 1 (Debaryomyces hansenii (strain ATCC 36239 / CBS 767 / BCRC 21394 / JCM 1990 / NBRC 0083 / IGC 2968) (Yeast)).